Here is a 282-residue protein sequence, read N- to C-terminus: Undecaprenyl-diphosphatase (282 aa).

5 consecutive transmembrane segments (helical) span residues 90–110, 121–141, 194–214, 228–248, and 256–276; these read YRLG…GLFF, LWVV…AEYV, FGFL…LPDA, QLLV…AWLL, and MYWF…LLAT.

It belongs to the UppP family.

Its subcellular location is the cell membrane. It carries out the reaction di-trans,octa-cis-undecaprenyl diphosphate + H2O = di-trans,octa-cis-undecaprenyl phosphate + phosphate + H(+). In terms of biological role, catalyzes the dephosphorylation of undecaprenyl diphosphate (UPP). Confers resistance to bacitracin. In Mycobacterium tuberculosis (strain ATCC 25618 / H37Rv), this protein is Undecaprenyl-diphosphatase.